The sequence spans 299 residues: Tyrosine recombinase XerC (299 aa).

The 85-residue stretch at 1-85 (MERQLDAYCE…AVRGLYHYLN (85 aa)) folds into the Core-binding (CB) domain. Residues 106 to 285 (RLPKTLDTDR…DFQHLATVYD (180 aa)) form the Tyr recombinase domain. Active-site residues include arginine 146, lysine 170, histidine 237, arginine 240, and histidine 263. The O-(3'-phospho-DNA)-tyrosine intermediate role is filled by tyrosine 272.

Belongs to the 'phage' integrase family. XerC subfamily. Forms a cyclic heterotetrameric complex composed of two molecules of XerC and two molecules of XerD.

The protein localises to the cytoplasm. Functionally, site-specific tyrosine recombinase, which acts by catalyzing the cutting and rejoining of the recombining DNA molecules. The XerC-XerD complex is essential to convert dimers of the bacterial chromosome into monomers to permit their segregation at cell division. It also contributes to the segregational stability of plasmids. The protein is Tyrosine recombinase XerC of Pseudomonas fluorescens.